We begin with the raw amino-acid sequence, 145 residues long: Internal scaffolding protein VP3 (145 aa).

The protein belongs to the microviridae B protein family.

It is found in the host cytoplasm. Participates in the assembly of the viral procapsid in the cytoplasm. Released from the procapsid upon genome packaging, possibly through affinity displacement by the protein ORF8, or by proteolysis. The chain is Internal scaffolding protein VP3 from Chlamydia phage 1 (Bacteriophage Chp1).